The primary structure comprises 318 residues: NADH-ubiquinone oxidoreductase chain 1 (318 aa).

8 helical membrane-spanning segments follow: residues 3–23 (LINLLAMIVPVLLAVAFLTLL), 69–89 (MLFIIAPTLALTLALTMWTPL), 102–122 (MLFILALSSLAVYTIMWSGWA), 144–164 (VTLAIIILSLLLMNGSFTLLS), 171–191 (YIWLLIPSWPLAMMWFISTLA), 222–242 (LFFLAEYANIIMMNALTIILF), 253–273 (ELYTINFTIKTLLFTAFFLWI), and 294–314 (LPLTLVMCMWHVALPIMLAGI).

The protein belongs to the complex I subunit 1 family. Core subunit of respiratory chain NADH dehydrogenase (Complex I) which is composed of 45 different subunits.

It is found in the mitochondrion inner membrane. The enzyme catalyses a ubiquinone + NADH + 5 H(+)(in) = a ubiquinol + NAD(+) + 4 H(+)(out). Its function is as follows. Core subunit of the mitochondrial membrane respiratory chain NADH dehydrogenase (Complex I) which catalyzes electron transfer from NADH through the respiratory chain, using ubiquinone as an electron acceptor. Essential for the catalytic activity and assembly of complex I. The polypeptide is NADH-ubiquinone oxidoreductase chain 1 (MT-ND1) (Murina suilla (Brown tube-nosed bat)).